A 426-amino-acid polypeptide reads, in one-letter code: Gamma-glutamyl phosphate reductase (426 aa).

The protein belongs to the gamma-glutamyl phosphate reductase family.

It is found in the cytoplasm. It catalyses the reaction L-glutamate 5-semialdehyde + phosphate + NADP(+) = L-glutamyl 5-phosphate + NADPH + H(+). It functions in the pathway amino-acid biosynthesis; L-proline biosynthesis; L-glutamate 5-semialdehyde from L-glutamate: step 2/2. Its function is as follows. Catalyzes the NADPH-dependent reduction of L-glutamate 5-phosphate into L-glutamate 5-semialdehyde and phosphate. The product spontaneously undergoes cyclization to form 1-pyrroline-5-carboxylate. The protein is Gamma-glutamyl phosphate reductase of Acidovorax ebreus (strain TPSY) (Diaphorobacter sp. (strain TPSY)).